Consider the following 274-residue polypeptide: Coiled-coil domain-containing protein 28A (274 aa).

Positions 121 to 166 (VSKSTGFSNPASQSTSQRPKLKRVMKEKTKPQGGEGKGAQSTPIQH) are disordered. Polar residues predominate over residues 122-138 (SKSTGFSNPASQSTSQR). Residues 234-263 (KRKTASDSNLDRLLSDLEELNSSIQKLHLA) are a coiled coil.

The chain is Coiled-coil domain-containing protein 28A (CCDC28A) from Homo sapiens (Human).